The primary structure comprises 603 residues: Replication protein A 70 kDa DNA-binding subunit (603 aa).

The segment at Pro-131–Asn-152 is disordered. A Phosphoserine modification is found at Ser-160. A DNA-binding region (OB) is located at residues Trp-179–Ser-252. Ser-420 carries the phosphoserine modification. The C4-type zinc finger occupies Cys-464 to Cys-486.

This sequence belongs to the replication factor A protein 1 family. As to quaternary structure, component of the heterotrimeric canonical replication protein A complex (RPA).

The protein resides in the nucleus. As part of the heterotrimeric replication protein A complex (RPA/RP-A), binds and stabilizes single-stranded DNA intermediates, that form during DNA replication or upon DNA stress. It prevents their reannealing and in parallel, recruits and activates different proteins and complexes involved in DNA metabolism. Thereby, it plays an essential role both in DNA replication and the cellular response to DNA damage. This Drosophila melanogaster (Fruit fly) protein is Replication protein A 70 kDa DNA-binding subunit.